Consider the following 461-residue polypeptide: Photosystem II CP43 reaction center protein (461 aa).

A propeptide spanning residues 1–2 is cleaved from the precursor; it reads ME. T3 carries the post-translational modification N-acetylthreonine. Position 3 is a phosphothreonine (T3). Transmembrane regions (helical) follow at residues 57 to 81, 122 to 143, 166 to 188, 243 to 263, and 279 to 300; these read LFEVAHFIPEKPMYEQGLILLPHLA, IIGPEVLEESFPFFGYDWKDKN, KAMFFGGVYDTWAPGGGDVRVIS, KPFSWARRALVWSGEAYLSYS, and WFNNTAYPSEFFGPTGPEASQA. A [CaMn4O5] cluster-binding site is contributed by E355. The chain crosses the membrane as a helical span at residues 435-459; the sequence is RARAASGGFEKGLDRENEPVLSMKL.

The protein belongs to the PsbB/PsbC family. PsbC subfamily. As to quaternary structure, PSII is composed of 1 copy each of membrane proteins PsbA, PsbB, PsbC, PsbD, PsbE, PsbF, PsbH, PsbI, PsbJ, PsbK, PsbL, PsbM, PsbT, PsbX, PsbY, PsbZ, Psb30/Ycf12, at least 3 peripheral proteins of the oxygen-evolving complex and a large number of cofactors. It forms dimeric complexes. It depends on Binds multiple chlorophylls and provides some of the ligands for the Ca-4Mn-5O cluster of the oxygen-evolving complex. It may also provide a ligand for a Cl- that is required for oxygen evolution. PSII binds additional chlorophylls, carotenoids and specific lipids. as a cofactor.

It is found in the plastid. Its subcellular location is the cyanelle thylakoid membrane. In terms of biological role, one of the components of the core complex of photosystem II (PSII). It binds chlorophyll and helps catalyze the primary light-induced photochemical processes of PSII. PSII is a light-driven water:plastoquinone oxidoreductase, using light energy to abstract electrons from H(2)O, generating O(2) and a proton gradient subsequently used for ATP formation. This chain is Photosystem II CP43 reaction center protein, found in Cyanophora paradoxa.